Consider the following 325-residue polypeptide: NADH-quinone oxidoreductase subunit H (325 aa).

9 consecutive transmembrane segments (helical) span residues 11 to 31 (ILLT…CGAF), 50 to 69 (SRVG…KMFF), 81 to 101 (LIFT…FAIV), 114 to 134 (IGIL…LFAG), 154 to 174 (LSYE…AGSF), 186 to 206 (LWNI…GVAV), 237 to 257 (FFVG…TLFF), 265 to 285 (LPPF…FILV), and 304 to 324 (ICLP…LYHA).

It belongs to the complex I subunit 1 family. NDH-1 is composed of 13 different subunits. Subunits NuoA, H, J, K, L, M, N constitute the membrane sector of the complex.

It is found in the cell inner membrane. The enzyme catalyses a quinone + NADH + 5 H(+)(in) = a quinol + NAD(+) + 4 H(+)(out). Functionally, NDH-1 shuttles electrons from NADH, via FMN and iron-sulfur (Fe-S) centers, to quinones in the respiratory chain. The immediate electron acceptor for the enzyme in this species is believed to be ubiquinone. Couples the redox reaction to proton translocation (for every two electrons transferred, four hydrogen ions are translocated across the cytoplasmic membrane), and thus conserves the redox energy in a proton gradient. This subunit may bind ubiquinone. The protein is NADH-quinone oxidoreductase subunit H of Edwardsiella ictaluri (strain 93-146).